A 121-amino-acid polypeptide reads, in one-letter code: Small ribosomal subunit protein uS13 (121 aa).

Residues 92–121 (RKGLPMRGQRTRTNARTRKGPRRAAQALKK) form a disordered region.

Belongs to the universal ribosomal protein uS13 family. As to quaternary structure, part of the 30S ribosomal subunit. Forms a loose heterodimer with protein S19. Forms two bridges to the 50S subunit in the 70S ribosome.

In terms of biological role, located at the top of the head of the 30S subunit, it contacts several helices of the 16S rRNA. In the 70S ribosome it contacts the 23S rRNA (bridge B1a) and protein L5 of the 50S subunit (bridge B1b), connecting the 2 subunits; these bridges are implicated in subunit movement. Contacts the tRNAs in the A and P-sites. In Burkholderia thailandensis (strain ATCC 700388 / DSM 13276 / CCUG 48851 / CIP 106301 / E264), this protein is Small ribosomal subunit protein uS13.